Reading from the N-terminus, the 461-residue chain is Serine incorporator 5 (461 aa).

The Extracellular segment spans residues 1–36 (MSARCCAGQLACCCGSAGCSLCCGCCPKFRQSRTTR). The chain crosses the membrane as a helical span at residues 37 to 57 (FMYLFYFILVIALCCVMMTPS). At 58–90 (VMKQVKDHIPFFEEFCKKTQAGGDACENLVGYS) the chain is on the cytoplasmic side. Residues 91–111 (AVYRVCFGMACFFALFCLLTL) traverse the membrane as a helical segment. The Extracellular portion of the chain corresponds to 112-125 (KVNNSKSCRAYIHN). A glycan (N-linked (GlcNAc...) asparagine) is linked at Asn114. The chain crosses the membrane as a helical span at residues 126 to 146 (GFWFFKLLLLGAMCSGAFFIP). Over 147 to 157 (DQETFLKVWRY) the chain is Cytoplasmic. Residues 158–178 (VGAGGSFLFICIQLLLIVQFA) traverse the membrane as a helical segment. The Extracellular segment spans residues 179–200 (HKWNKNWTAGTVRNKLWYASLS). Residue Asn184 is glycosylated (N-linked (GlcNAc...) asparagine). A helical membrane pass occupies residues 201–221 (LVTLIMYSVAVGGLALMAVFY). Over 222-231 (TQWDDCMDNK) the chain is Cytoplasmic. A helical transmembrane segment spans residues 232 to 252 (ILLGVHGGLCVLISLVAISPC). The Extracellular segment spans residues 253-260 (VQNRQPHS). The chain crosses the membrane as a helical span at residues 261–281 (GLLQSGLISCYVTYLTFSALT). Topologically, residues 282 to 312 (SKPEKKVLDEHGKNVTICAPDFGQDLHRDEN) are cytoplasmic. Residues 313–333 (MVTWLGTLLLIVCISYSCLTS) form a helical membrane-spanning segment. Residues 334–392 (TTRSSSDALQSRYGAPELEVARCCFCFGPDGEDTEEQQNVKKGPRVIYDEKKGTVYSYS) lie on the Extracellular side of the membrane. The chain crosses the membrane as a helical span at residues 393–413 (YFHFVFFLASLYVMMTLTSWF). Over 414–422 (HYENATIKT) the chain is Cytoplasmic. Residues 423–443 (FFSGWSVFWVKMASCWMCVLL) traverse the membrane as a helical segment. Over 444-461 (YLQTLVAPLCCPSRQFSV) the chain is Extracellular.

This sequence belongs to the TDE1 family.

The protein localises to the cell membrane. It carries out the reaction a 1,2-diacyl-sn-glycero-3-phospho-L-serine(in) = a 1,2-diacyl-sn-glycero-3-phospho-L-serine(out). It catalyses the reaction a 1,2-diacyl-sn-glycero-3-phosphocholine(in) = a 1,2-diacyl-sn-glycero-3-phosphocholine(out). The catalysed reaction is a 1,2-diacyl-sn-glycero-3-phosphoethanolamine(in) = a 1,2-diacyl-sn-glycero-3-phosphoethanolamine(out). In terms of biological role, restriction factor required to restrict infectivity of gammaretroviruses: acts by inhibiting an early step of viral infection. Impairs the penetration of the viral particle into the cytoplasm. Non-ATP-dependent, non-specific lipid transporter for phosphatidylserine, phosphatidylcholine, and phosphatidylethanolamine. Functions as a scramblase that flips lipids in both directions across the membrane. Phospholipid scrambling results in gammaretroviral surface exposure of phosphatidylserine and loss of membrane asymmetry, which leads to loss of infectivity. Enhances the incorporation of serine into phosphatidylserine and sphingolipids. May play a role in providing serine molecules for the formation of myelin glycosphingolipids in oligodendrocytes. This is Serine incorporator 5 (Serinc5) from Mus musculus (Mouse).